We begin with the raw amino-acid sequence, 242 residues long: Carboxy-S-adenosyl-L-methionine synthase (242 aa).

Residues Tyr-38, Gly-63–Ser-65, Asp-88–Asn-89, Asp-116–Leu-117, and Arg-199 each bind S-adenosyl-L-methionine.

It belongs to the class I-like SAM-binding methyltransferase superfamily. Cx-SAM synthase family. As to quaternary structure, homodimer.

It catalyses the reaction prephenate + S-adenosyl-L-methionine = carboxy-S-adenosyl-L-methionine + 3-phenylpyruvate + H2O. Functionally, catalyzes the conversion of S-adenosyl-L-methionine (SAM) to carboxy-S-adenosyl-L-methionine (Cx-SAM). This is Carboxy-S-adenosyl-L-methionine synthase from Methylococcus capsulatus (strain ATCC 33009 / NCIMB 11132 / Bath).